The chain runs to 506 residues: Glutamate--tRNA ligase (506 aa).

Positions 9-19 (PSPTGFQHIGG) match the 'HIGH' region motif. Residues 251 to 255 (KLSKR) carry the 'KMSKS' region motif. Lys254 serves as a coordination point for ATP.

Belongs to the class-I aminoacyl-tRNA synthetase family. Glutamate--tRNA ligase type 1 subfamily. In terms of assembly, monomer.

It is found in the cytoplasm. The catalysed reaction is tRNA(Glu) + L-glutamate + ATP = L-glutamyl-tRNA(Glu) + AMP + diphosphate. Functionally, catalyzes the attachment of glutamate to tRNA(Glu) in a two-step reaction: glutamate is first activated by ATP to form Glu-AMP and then transferred to the acceptor end of tRNA(Glu). The sequence is that of Glutamate--tRNA ligase from Treponema denticola (strain ATCC 35405 / DSM 14222 / CIP 103919 / JCM 8153 / KCTC 15104).